The sequence spans 356 residues: Biotin synthase (356 aa).

The region spanning Gly54–Leu278 is the Radical SAM core domain. Residues Cys69, Cys73, and Cys76 each contribute to the [4Fe-4S] cluster site. [2Fe-2S] cluster is bound by residues Cys113, Cys144, Cys204, and Arg282.

It belongs to the radical SAM superfamily. Biotin synthase family. As to quaternary structure, homodimer. [4Fe-4S] cluster serves as cofactor. [2Fe-2S] cluster is required as a cofactor.

The catalysed reaction is (4R,5S)-dethiobiotin + (sulfur carrier)-SH + 2 reduced [2Fe-2S]-[ferredoxin] + 2 S-adenosyl-L-methionine = (sulfur carrier)-H + biotin + 2 5'-deoxyadenosine + 2 L-methionine + 2 oxidized [2Fe-2S]-[ferredoxin]. It functions in the pathway cofactor biosynthesis; biotin biosynthesis; biotin from 7,8-diaminononanoate: step 2/2. Catalyzes the conversion of dethiobiotin (DTB) to biotin by the insertion of a sulfur atom into dethiobiotin via a radical-based mechanism. This is Biotin synthase from Novosphingobium aromaticivorans (strain ATCC 700278 / DSM 12444 / CCUG 56034 / CIP 105152 / NBRC 16084 / F199).